Here is a 483-residue protein sequence, read N- to C-terminus: Spore germination protein B1 (483 aa).

5 consecutive transmembrane segments (helical) span residues 289-309 (ILIT…HTGL), 323-343 (LNVP…IELI), 353-373 (PIGQ…AVQA), 375-395 (IVSA…FTVP), and 410-430 (VMIS…LFVI).

It belongs to the GerABKA family.

The protein resides in the cell membrane. Its function is as follows. Involved in the response to the germinative mixture of L-asparagine, glucose, fructose and potassium ions (AGFK). Cannot stimulate germination in the absence of gerD and gerK gene products (fructose and glucose receptors respectively). This is Spore germination protein B1 (gerBA) from Bacillus subtilis (strain 168).